A 711-amino-acid chain; its full sequence is Hydroperoxide isomerase ALOXE3 (711 aa).

The 118-residue stretch at 2 to 119 (AVYRLCVTTG…TVELRPGTAR (118 aa)) folds into the PLAT domain. The 593-residue stretch at 119–711 (RTICQDALPL…PPLIENSVSI (593 aa)) folds into the Lipoxygenase domain. Residues His-408, His-413, His-588, Asn-592, and Ile-711 each coordinate Fe cation.

Belongs to the lipoxygenase family. Fe cation serves as cofactor.

The protein resides in the cytoplasm. It catalyses the reaction a hydroperoxyeicosatetraenoate = a hydroxy-epoxy-eicosatetraenoate. The enzyme catalyses a hydroperoxyeicosatetraenoate = an oxoeicosatetraenoate + H2O. It carries out the reaction (12R)-hydroperoxy-(5Z,8Z,10E,14Z)-eicosatetraenoate = (8R)-hydroxy-(11R,12R)-epoxy-(5Z,9E,14Z)-eicosatrienoate. The catalysed reaction is (12S)-hydroperoxy-(5Z,8Z,10E,14Z)-eicosatetraenoate = (8R)-hydroxy-(11S,12S)-epoxy-(5Z,9E,14Z)-eicosatrienoate. It catalyses the reaction (12S)-hydroperoxy-(5Z,8Z,10E,14Z)-eicosatetraenoate = (10R)-hydroxy-(11S,12S)-epoxy-(5Z,8Z,14Z)-eicosatrienoate. The enzyme catalyses (15S)-hydroperoxy-(5Z,8Z,11Z,13E)-eicosatetraenoate = (13R)-hydroxy-(14S,15S)-epoxy-(5Z,8Z,11Z)-eicosatrienoate. It carries out the reaction (5S)-hydroperoxy-(6E,8Z,11Z,14Z)-eicosatetraenoate = 7R-hydroxy-5S,6S-epoxy-(8Z,11Z,14Z)-eicosatrienoate. The catalysed reaction is (13S)-hydroperoxy-(9Z,11E)-octadecadienoate = 11-hydroxy-(12S,13S)-epoxy-(9Z)-octadecenoate. It catalyses the reaction N-[omega-(9R)-hydroperoxy-(10E,12Z)-octadecadienoyloxy]acyl-beta-D-glucosyl-(1&lt;-&gt;1)-octadecasphing-4E-enine = a N-[omega-(9R,10R)-epoxy-(13R)-hydroxy-(11E)-octadecenoyloxy]acyl-beta-D-glucosyl-(1&lt;-&gt;1)-sphing-4E-enine. The enzyme catalyses a N-[omega-(9R)-hydroperoxy-(10E,12Z)-octadecadienoyloxy]-acylsphin-4E-enine = a N-[omega-(9R,10R)-epoxy-(13R)-hydroxy-(11E)-octadecenoyloxy]-acylsphing-4E-enine. It carries out the reaction (12R)-hydroperoxy-(5Z,8Z,10E,14Z)-eicosatetraenoate = 12-oxo-(5Z,8Z,10E,14Z)-eicosatetraenoate + H2O. The catalysed reaction is (12S)-hydroperoxy-(5Z,8Z,10E,14Z)-eicosatetraenoate = 12-oxo-(5Z,8Z,10E,14Z)-eicosatetraenoate + H2O. It catalyses the reaction (15S)-hydroperoxy-(5Z,8Z,11Z,13E)-eicosatetraenoate = 15-oxo-(5Z,8Z,11Z,13E)-eicosatetraenoate + H2O. The enzyme catalyses (13S)-hydroperoxy-(9Z,11E)-octadecadienoate = 13-oxo-(9Z,11E)-octadecadienoate + H2O. It carries out the reaction (8S)-hydroperoxy-(5Z,9E,11Z,14Z)-eicosatetraenoate = (10R)-hydroxy-(8S,9S)-epoxy-(5Z,11Z,14Z)-eicosatrienoate. The catalysed reaction is (8R)-hydroperoxy-(5Z,9E,11Z,14Z)-eicosatetraenoate = 8-oxo-(5Z,9E,11Z,14Z)-eicosatetraenoate + H2O. It catalyses the reaction (8S)-hydroperoxy-(5Z,9E,11Z,14Z)-eicosatetraenoate = 8-oxo-(5Z,9E,11Z,14Z)-eicosatetraenoate + H2O. Its pathway is lipid metabolism; hydroperoxy eicosatetraenoic acid biosynthesis. It participates in lipid metabolism; sphingolipid metabolism. Non-heme iron-containing lipoxygenase which is atypical in that it displays a prominent hydroperoxide isomerase activity and a reduced lipoxygenases activity. The hydroperoxide isomerase activity catalyzes the isomerization of hydroperoxides, derived from arachidonic and linoleic acid by ALOX12B, into hepoxilin-type epoxyalcohols and ketones. In presence of oxygen, oxygenates polyunsaturated fatty acids, including arachidonic acid, to produce fatty acid hydroperoxides. In the skin, acts downstream of ALOX12B on the linoleate moiety of esterified omega-hydroxyacyl-sphingosine (EOS) ceramides to produce an epoxy-ketone derivative, a crucial step in the conjugation of omega-hydroxyceramide to membrane proteins. Therefore plays a crucial role in the synthesis of corneocytes lipid envelope and the establishment of the skin barrier to water loss. In parallel, it may have a signaling function in barrier formation through the production of hepoxilins metabolites. Also plays a role in adipocyte differentiation through hepoxilin A3 and hepoxilin B3 production which in turn activate PPARG. Through the production of hepoxilins in the spinal cord, it may regulate inflammatory tactile allodynia. In Rattus norvegicus (Rat), this protein is Hydroperoxide isomerase ALOXE3.